The primary structure comprises 348 residues: Protein disulfide isomerase CRELD2 (348 aa).

The signal sequence occupies residues Met1–Val22. A CXXC motif is present at residues Cys30–Cys33. Cystine bridges form between Cys30–Cys33, Cys139–Cys153, Cys147–Cys165, and Cys167–Cys176. An EGF-like 1 domain is found at Asp135–Ile177. Residues His192–Pro239 form an FU 1 repeat. N-linked (GlcNAc...) asparagine glycosylation occurs at Asn250. Residues Ser252–Val299 form an FU 2 repeat. The CXXC signature appears at Cys262 to Cys265. 4 disulfides stabilise this stretch: Cys262–Cys265, Cys293–Cys307, Cys300–Cys316, and Cys318–Cys328. Residues Asp289 to Leu329 form the EGF-like 2; calcium-binding domain.

This sequence belongs to the CRELD family. As to quaternary structure, interacts with CHRNA4. Component of a complex containing at least CRELD2, MANF, MATN3 and PDIA4.

It is found in the endoplasmic reticulum. It catalyses the reaction Catalyzes the rearrangement of -S-S- bonds in proteins.. In terms of biological role, protein disulfide isomerase. Might play a role in the unfolded protein response. May regulate transport of alpha4-beta2 neuronal acetylcholine receptor. This chain is Protein disulfide isomerase CRELD2 (CRELD2), found in Cricetulus griseus (Chinese hamster).